A 249-amino-acid chain; its full sequence is MGRGPVQLRRIENKINRQVTFSKRRNGLLKKAHEISVLCDADVALIVFSTKGKLYEFSSHSSMEGILERYQRYSFDERAVLEPNTEDQENWGDEYGILKSKLDALQKSQRQLLGEQLDTLTIKELQQLEHQLEYSLKHIRSKKNQLLFESISELQKKEKSLKNQNNVLQKLMETEKEKNNAIINTNREEQNGATPSTSSPTPVTAPDPIPTTNNSQSQPRGSGESEAQPSPAQAGNSKLPPWMLRTSHT.

One can recognise an MADS-box domain in the interval 1–61; sequence MGRGPVQLRR…GKLYEFSSHS (61 aa). The region spanning 88–179 is the K-box domain; sequence QENWGDEYGI…KLMETEKEKN (92 aa). The interval 184-249 is disordered; sequence NTNREEQNGA…PPWMLRTSHT (66 aa). Over residues 210–236 the composition is skewed to polar residues; it reads PTTNNSQSQPRGSGESEAQPSPAQAGN.

As to expression, widely expressed. Transcripts accumulate to higher levels in organs that retain meristematic characteristics: in the apical meristem and in the meristematic leaf primordia formed on its flank; in the developing panicle at the early stage of rachis-branch primordia differentiation; in the procambium of the rachis branches and in all floral organ primordia.

Its subcellular location is the nucleus. In terms of biological role, probable transcription factor. This is MADS-box transcription factor 18 (MADS18) from Oryza sativa subsp. indica (Rice).